The following is a 590-amino-acid chain: L-fucose isomerase (590 aa).

Residues glutamate 337 and aspartate 361 each act as proton acceptor in the active site. Residues glutamate 337, aspartate 361, and histidine 528 each coordinate Mn(2+).

The protein belongs to the L-fucose isomerase family. It depends on Mn(2+) as a cofactor.

The protein resides in the cytoplasm. The enzyme catalyses L-fucose = L-fuculose. It participates in carbohydrate degradation; L-fucose degradation; L-lactaldehyde and glycerone phosphate from L-fucose: step 1/3. Converts the aldose L-fucose into the corresponding ketose L-fuculose. This Bacteroides fragilis (strain YCH46) protein is L-fucose isomerase.